A 156-amino-acid polypeptide reads, in one-letter code: Small ribosomal subunit protein uS7 (156 aa).

It belongs to the universal ribosomal protein uS7 family. Part of the 30S ribosomal subunit. Contacts proteins S9 and S11.

In terms of biological role, one of the primary rRNA binding proteins, it binds directly to 16S rRNA where it nucleates assembly of the head domain of the 30S subunit. Is located at the subunit interface close to the decoding center, probably blocks exit of the E-site tRNA. This is Small ribosomal subunit protein uS7 from Shewanella sediminis (strain HAW-EB3).